Consider the following 253-residue polypeptide: 3-deoxy-manno-octulosonate cytidylyltransferase (253 aa).

The protein belongs to the KdsB family.

Its subcellular location is the cytoplasm. The enzyme catalyses 3-deoxy-alpha-D-manno-oct-2-ulosonate + CTP = CMP-3-deoxy-beta-D-manno-octulosonate + diphosphate. It participates in nucleotide-sugar biosynthesis; CMP-3-deoxy-D-manno-octulosonate biosynthesis; CMP-3-deoxy-D-manno-octulosonate from 3-deoxy-D-manno-octulosonate and CTP: step 1/1. The protein operates within bacterial outer membrane biogenesis; lipopolysaccharide biosynthesis. Functionally, activates KDO (a required 8-carbon sugar) for incorporation into bacterial lipopolysaccharide in Gram-negative bacteria. The protein is 3-deoxy-manno-octulosonate cytidylyltransferase of Neisseria gonorrhoeae (strain ATCC 700825 / FA 1090).